The chain runs to 583 residues: Aspartate--tRNA ligase (583 aa).

Residue Glu-174 participates in L-aspartate binding. The tract at residues 198–201 (QITK) is aspartate. Position 220 (Arg-220) interacts with L-aspartate. ATP-binding positions include 220–222 (RDE) and Gln-229. An L-aspartate-binding site is contributed by His-443. Glu-477 contacts ATP. Arg-484 is an L-aspartate binding site. 529–532 (GLDR) is an ATP binding site.

It belongs to the class-II aminoacyl-tRNA synthetase family. Type 1 subfamily. As to quaternary structure, homodimer.

The protein localises to the cytoplasm. The catalysed reaction is tRNA(Asp) + L-aspartate + ATP = L-aspartyl-tRNA(Asp) + AMP + diphosphate. In terms of biological role, catalyzes the attachment of L-aspartate to tRNA(Asp) in a two-step reaction: L-aspartate is first activated by ATP to form Asp-AMP and then transferred to the acceptor end of tRNA(Asp). The sequence is that of Aspartate--tRNA ligase from Streptococcus agalactiae serotype Ia (strain ATCC 27591 / A909 / CDC SS700).